A 134-amino-acid polypeptide reads, in one-letter code: Lymphocyte antigen 6 complex locus protein G6d (134 aa).

The N-terminal stretch at 1 to 19 is a signal peptide; the sequence is MNSQLIGILFSALLGAALG. The region spanning 22 to 121 is the UPAR/Ly6 domain; that stretch reads MRCYDCGGGP…ASSSTPLCIL (100 aa). Intrachain disulfides connect Cys-24–Cys-48, Cys-27–Cys-35, Cys-42–Cys-76, Cys-82–Cys-101, and Cys-102–Cys-107. O-linked (GalNAc...) threonine glycosylation is present at Thr-68. Residue Asn-108 is the site of GPI-anchor amidated asparagine attachment. Positions 109-134 are cleaved as a propeptide — removed in mature form; it reads GAVASSSTPLCILAAVTTLAWLLSGQ.

As to quaternary structure, homodimer. In terms of processing, O-glycosylated.

It localises to the cell membrane. In Rattus norvegicus (Rat), this protein is Lymphocyte antigen 6 complex locus protein G6d (Ly6g6d).